The chain runs to 168 residues: SPbeta prophage-derived uncharacterized protein YonX (168 aa).

Residues 1-53 (MNAQLFNLESRLDELENEINTQYCELDTNLDALKSNRIELESQLEKFESSLTN) adopt a coiled-coil conformation.

The protein is SPbeta prophage-derived uncharacterized protein YonX (yonX) of Bacillus subtilis (strain 168).